Consider the following 509-residue polypeptide: Carboxysome shell carbonic anhydrase (509 aa).

Position 170 (C170) interacts with Zn(2+). D172 functions as the Proton acceptor in the catalytic mechanism. H238 and C249 together coordinate Zn(2+).

The protein belongs to the beta-class carbonic anhydrase family. CsoSCA subfamily. Homodimer. Zn(2+) serves as cofactor.

It localises to the carboxysome. It catalyses the reaction hydrogencarbonate + H(+) = CO2 + H2O. In terms of biological role, reversible hydration of carbon dioxide. Essential for photosynthetic carbon dioxide fixation, supplies CO(2) to RuBisCO (ribulose bisphosphate carboxylase, cbbL-cbbS) in the carboxysome. There are estimated to be 29 CsoSCA oligomers per carboxysome. This chain is Carboxysome shell carbonic anhydrase, found in Prochlorococcus marinus subsp. pastoris (strain CCMP1986 / NIES-2087 / MED4).